We begin with the raw amino-acid sequence, 463 residues long: ATP synthase subunit beta (463 aa).

152-159 (GGAGVGKT) serves as a coordination point for ATP.

It belongs to the ATPase alpha/beta chains family. F-type ATPases have 2 components, CF(1) - the catalytic core - and CF(0) - the membrane proton channel. CF(1) has five subunits: alpha(3), beta(3), gamma(1), delta(1), epsilon(1). CF(0) has three main subunits: a(1), b(2) and c(9-12). The alpha and beta chains form an alternating ring which encloses part of the gamma chain. CF(1) is attached to CF(0) by a central stalk formed by the gamma and epsilon chains, while a peripheral stalk is formed by the delta and b chains.

Its subcellular location is the cell membrane. It carries out the reaction ATP + H2O + 4 H(+)(in) = ADP + phosphate + 5 H(+)(out). Functionally, produces ATP from ADP in the presence of a proton gradient across the membrane. The catalytic sites are hosted primarily by the beta subunits. The polypeptide is ATP synthase subunit beta (Clostridium botulinum (strain Eklund 17B / Type B)).